We begin with the raw amino-acid sequence, 867 residues long: Inactive tyrosine-protein kinase kin-32 (867 aa).

The region spanning 3-327 (GLARVFLIGG…GYQMLYNQRD (325 aa)) is the FERM domain. The Protein kinase domain maps to 367–631 (ITLKELIGGG…IIEDVRQQII (265 aa)). ATP contacts are provided by residues 373–381 (IGGGQFGNV) and K400. Residues 662 to 691 (TLYRTMEDQKRQAEEDAKWLEQEDDEDEDD) adopt a coiled-coil conformation. Residues 674–729 (AEEDAKWLEQEDDEDEDDQDIDQIPSTSHSSVENIRTSNGYLHHTPTSTRSLRFED) form a disordered region. Residues 683–694 (QEDDEDEDDQDI) are compositionally biased toward acidic residues. The span at 698 to 724 (PSTSHSSVENIRTSNGYLHHTPTSTRS) shows a compositional bias: polar residues.

Belongs to the protein kinase superfamily. Tyr protein kinase family. FAK subfamily. Expressed in body wall muscles and some neurons in the head.

Has apparently no tyrosine kinase activity in vitro when expressed in mammalian cells. In Caenorhabditis elegans, this protein is Inactive tyrosine-protein kinase kin-32.